Here is a 95-residue protein sequence, read N- to C-terminus: Small ribosomal subunit protein bS6 (95 aa).

It belongs to the bacterial ribosomal protein bS6 family.

Binds together with bS18 to 16S ribosomal RNA. In Rhodococcus jostii (strain RHA1), this protein is Small ribosomal subunit protein bS6.